Consider the following 172-residue polypeptide: Myosin regulatory light chain 2, smooth muscle major isoform (172 aa).

The span at 1 to 16 (MSSKRAKAKTTKKRPQ) shows a compositional bias: basic residues. Positions 1–20 (MSSKRAKAKTTKKRPQRATS) are disordered. S2 is modified (N-acetylserine). 3 consecutive EF-hand domains span residues 29 to 64 (SQIQ…MGKN), 98 to 133 (DPED…MGDR), and 134 to 169 (FTDE…GAKD). Residues D42, N44, D46, and D53 each coordinate Ca(2+).

Myosin is a hexamer of 2 heavy chains and 4 light chains.

In terms of biological role, myosin regulatory subunit that plays an important role in regulation of both smooth muscle and nonmuscle cell contractile activity. Implicated in cytokinesis, receptor capping, and cell locomotion. The chain is Myosin regulatory light chain 2, smooth muscle major isoform from Gallus gallus (Chicken).